The chain runs to 273 residues: uncharacterized protein (273 aa).

The protein belongs to the AtsA family.

This is an uncharacterized protein from Mycobacterium tuberculosis (strain CDC 1551 / Oshkosh).